A 545-amino-acid chain; its full sequence is CTP synthase (545 aa).

The tract at residues 1-267 is amidoligase domain; it reads MTKFIFVTGG…AEQVLNLLQM (267 aa). A CTP-binding site is contributed by Ser-13. Ser-13 contributes to the UTP binding site. Residues 14–19 and Asp-71 each bind ATP; that span reads SIGKGI. Asp-71 and Glu-141 together coordinate Mg(2+). CTP is bound by residues 148–150, 188–193, and Lys-224; these read DIE and KTKPTQ. Residues 188–193 and Lys-224 contribute to the UTP site; that span reads KTKPTQ. Residues 292–534 form the Glutamine amidotransferase type-1 domain; it reads EIAIVGKYVQ…IQAAIALSLS (243 aa). Gly-354 contributes to the L-glutamine binding site. Cys-381 serves as the catalytic Nucleophile; for glutamine hydrolysis. Residues 382 to 385, Glu-405, and Arg-462 each bind L-glutamine; that span reads LGMQ. Active-site residues include His-507 and Glu-509.

The protein belongs to the CTP synthase family. Homotetramer.

The enzyme catalyses UTP + L-glutamine + ATP + H2O = CTP + L-glutamate + ADP + phosphate + 2 H(+). The catalysed reaction is L-glutamine + H2O = L-glutamate + NH4(+). It carries out the reaction UTP + NH4(+) + ATP = CTP + ADP + phosphate + 2 H(+). It participates in pyrimidine metabolism; CTP biosynthesis via de novo pathway; CTP from UDP: step 2/2. Allosterically activated by GTP, when glutamine is the substrate; GTP has no effect on the reaction when ammonia is the substrate. The allosteric effector GTP functions by stabilizing the protein conformation that binds the tetrahedral intermediate(s) formed during glutamine hydrolysis. Inhibited by the product CTP, via allosteric rather than competitive inhibition. In terms of biological role, catalyzes the ATP-dependent amination of UTP to CTP with either L-glutamine or ammonia as the source of nitrogen. Regulates intracellular CTP levels through interactions with the four ribonucleotide triphosphates. The chain is CTP synthase from Nostoc punctiforme (strain ATCC 29133 / PCC 73102).